Reading from the N-terminus, the 221-residue chain is Epididymal secretory glutathione peroxidase (221 aa).

A signal peptide spans 1–21 (MAIQLRVFYLVPLLLASYVQT). The active site involves Cys73.

The protein belongs to the glutathione peroxidase family. As to expression, epididymis.

Its subcellular location is the secreted. The catalysed reaction is 2 glutathione + H2O2 = glutathione disulfide + 2 H2O. Its function is as follows. Protects cells and enzymes from oxidative damage, by catalyzing the reduction of hydrogen peroxide, lipid peroxides and organic hydroperoxide, by glutathione. May constitute a glutathione peroxidase-like protective system against peroxide damage in sperm membrane lipids. This Rattus norvegicus (Rat) protein is Epididymal secretory glutathione peroxidase (Gpx5).